The following is a 476-amino-acid chain: Cysteine--tRNA ligase (476 aa).

Cys-36 is a binding site for Zn(2+). Positions 38-48 (PTVYDYAHIGN) match the 'HIGH' region motif. The Zn(2+) site is built by Cys-221, His-246, and Glu-250. The short motif at 278 to 282 (KMSKS) is the 'KMSKS' region element. Lys-281 serves as a coordination point for ATP.

This sequence belongs to the class-I aminoacyl-tRNA synthetase family. As to quaternary structure, monomer. Requires Zn(2+) as cofactor.

The protein localises to the cytoplasm. The enzyme catalyses tRNA(Cys) + L-cysteine + ATP = L-cysteinyl-tRNA(Cys) + AMP + diphosphate. The sequence is that of Cysteine--tRNA ligase from Chlamydia felis (strain Fe/C-56) (Chlamydophila felis).